A 359-amino-acid polypeptide reads, in one-letter code: (2E,6E)-farnesyl diphosphate synthase (359 aa).

A disordered region spans residues 1–21 (MRGTDEKYGLPPQPDSDRMTR). Lys-73, Arg-76, and His-105 together coordinate isopentenyl diphosphate. Mg(2+) is bound by residues Asp-112 and Asp-116. Residues 112–116 (DDLMD) carry the DDXXD motif motif. Arg-121 lines the (2E)-geranyl diphosphate pocket. An isopentenyl diphosphate-binding site is contributed by Arg-122. (2E)-geranyl diphosphate contacts are provided by Lys-201, Thr-202, and Gln-239. A DDXXD motif motif is present at residues 242–246 (DDLLG). The (2E)-geranyl diphosphate site is built by Lys-256 and Lys-266.

Belongs to the FPP/GGPP synthase family. Requires Mg(2+) as cofactor.

It is found in the cytoplasm. The enzyme catalyses isopentenyl diphosphate + (2E)-geranyl diphosphate = (2E,6E)-farnesyl diphosphate + diphosphate. It participates in isoprenoid biosynthesis; farnesyl diphosphate biosynthesis; farnesyl diphosphate from geranyl diphosphate and isopentenyl diphosphate. Functionally, catalyzes the condensation of isopentenyl pyrophosphate (IPP) with geranyl diphosphate (GPP) to yield (2E,6E)-farnesyl diphosphate (E,E-FPP). May be used for squalene and possibly sterol biosynthesis. The sequence is that of (2E,6E)-farnesyl diphosphate synthase from Mycobacterium bovis (strain ATCC BAA-935 / AF2122/97).